Here is a 289-residue protein sequence, read N- to C-terminus: MDQAGIIRDLLIWLEGHLDQPLSLDNVAAKAGYSKWHLQRMFKDVTGHAIGAYIRARRLSKSAVALRLTARPILDIALQYRFDSQQTFTRAFKKQFAQTPALYRRSPEWSAFGIRPPLRLGEFTMPEHKFVTLEDTPLIGVTQSYSCSLEQISDFRHEMRYQFWHDFLGNAPTIPPVLYGLNETRPSQDKDDEQEVFYTTALAQDQADGYVLTGHPVMLQGGEYVMFTYEGLGTGVQEFILTVYGTCMPMLNLTRRKGQDIERYYPAEDAKAGDRPINLRCELLIPIRR.

The region spanning 8–106 (RDLLIWLEGH…AQTPALYRRS (99 aa)) is the HTH araC/xylS-type domain. DNA-binding regions (H-T-H motif) lie at residues 25–46 (DNVA…KDVT) and 73–96 (ILDI…KKQF).

Its function is as follows. Transcriptional regulator. Binds to the right arm of the replication origin oriC of the chromosome. Rob binding may influence the formation of the nucleoprotein structure, required for oriC function in the initiation of replication. The polypeptide is Right origin-binding protein (rob) (Escherichia coli O157:H7).